Here is a 255-residue protein sequence, read N- to C-terminus: 5'-nucleotidase SurE (255 aa).

Positions 8, 9, 39, and 95 each coordinate a divalent metal cation.

It belongs to the SurE nucleotidase family. The cofactor is a divalent metal cation.

The protein resides in the cytoplasm. It carries out the reaction a ribonucleoside 5'-phosphate + H2O = a ribonucleoside + phosphate. Its function is as follows. Nucleotidase that shows phosphatase activity on nucleoside 5'-monophosphates. This chain is 5'-nucleotidase SurE, found in Thermosipho africanus (strain TCF52B).